A 311-amino-acid polypeptide reads, in one-letter code: Porphobilinogen deaminase (311 aa).

Cys242 is modified (S-(dipyrrolylmethanemethyl)cysteine).

Belongs to the HMBS family. In terms of assembly, monomer. It depends on dipyrromethane as a cofactor.

The enzyme catalyses 4 porphobilinogen + H2O = hydroxymethylbilane + 4 NH4(+). The protein operates within porphyrin-containing compound metabolism; protoporphyrin-IX biosynthesis; coproporphyrinogen-III from 5-aminolevulinate: step 2/4. Its function is as follows. Tetrapolymerization of the monopyrrole PBG into the hydroxymethylbilane pre-uroporphyrinogen in several discrete steps. This Hahella chejuensis (strain KCTC 2396) protein is Porphobilinogen deaminase.